The primary structure comprises 185 residues: Ribosome-recycling factor (185 aa).

It belongs to the RRF family.

It is found in the cytoplasm. In terms of biological role, responsible for the release of ribosomes from messenger RNA at the termination of protein biosynthesis. May increase the efficiency of translation by recycling ribosomes from one round of translation to another. The polypeptide is Ribosome-recycling factor (Clostridium beijerinckii (strain ATCC 51743 / NCIMB 8052) (Clostridium acetobutylicum)).